The following is a 400-amino-acid chain: Mu-type opioid receptor (400 aa).

The Extracellular segment spans residues 1 to 68 (MDSSAVPTNA…CPPTGSPSMI (68 aa)). N-linked (GlcNAc...) asparagine glycosylation is found at Asn9, Asn12, Asn33, Asn40, and Asn48. The chain crosses the membrane as a helical span at residues 69 to 93 (TAITIMALYSIVCVVGLFGNFLVMY). At 94–106 (VIVRYTKMKTATN) the chain is on the cytoplasmic side. The chain crosses the membrane as a helical span at residues 107 to 131 (IYIFNLALADALVTSTLPFQSVNYL). Residues 132 to 142 (MGTWPFGTILC) are Extracellular-facing. A disulfide bond links Cys142 and Cys219. The chain crosses the membrane as a helical span at residues 143–165 (KIVISIDYYNMSTSIFTLCTMSV). Topologically, residues 166–185 (DRYIAVCHPVKALDFRTPRN) are cytoplasmic. Tyr168 is subject to Phosphotyrosine. Residues 186–207 (AKIINVCNWILSSAIGLPVMFM) form a helical membrane-spanning segment. The Extracellular segment spans residues 208 to 230 (ATTKYRQGSIDCTLTFSHPSWYW). Residues 231-255 (ENLLKICVFIFAFIMPVLIITVCYG) form a helical membrane-spanning segment. Topologically, residues 256-283 (LMILRLKSVRMLSGSKEKDRNLRRITRM) are cytoplasmic. Residues 284–306 (VLVVVAVFIICWTPIHIYVIIKA) form a helical membrane-spanning segment. Residues 307–314 (LVTIPETT) lie on the Extracellular side of the membrane. The chain crosses the membrane as a helical span at residues 315–338 (FQTVSWHFCIALGYTNSCLNPVLY). Positions 334 to 338 (NPVLY) match the NPxxY; plays a role in stabilizing the activated conformation of the receptor motif. Residues 339–400 (AFLDEDFKRC…NLEAETAPLP (62 aa)) lie on the Cytoplasmic side of the membrane. Cys353 carries S-palmitoyl cysteine lipidation. A disordered region spans residues 364 to 386 (NSTRIRQNTRDHPSTANTVDRTN). Phosphoserine is present on Ser365. At Thr372 the chain carries Phosphothreonine. Residue Ser377 is modified to Phosphoserine. Position 396 is a phosphothreonine (Thr396).

It belongs to the G-protein coupled receptor 1 family. Forms homooligomers and heterooligomers with other GPCRs, such as OPRD1, OPRK1, OPRL1, NPFFR2, ADRA2A, SSTR2, CNR1 and CCR5 (probably in dimeric forms). Interacts with heterotrimeric G proteins; interaction with a heterotrimeric complex containing GNAI1, GNB1 and GNG2 stabilizes the active conformation of the receptor and increases its affinity for endomorphin-2, the synthetic opioid peptide DAMGO and for morphinan agonists. Interacts with PPL; the interaction disrupts agonist-mediated G-protein activation. Interacts (via C-terminus) with DNAJB4 (via C-terminus). Interacts with calmodulin; the interaction inhibits the constitutive activity of OPRM1; it abolishes basal and attenuates agonist-stimulated G-protein coupling. Interacts with FLNA, PLD2, RANBP9 and WLS and GPM6A. Interacts with RTP4. Interacts with SYP and GNAS. Interacts with RGS9, RGS17, RGS20, RGS4, PPP1R9B and HINT1. In terms of processing, phosphorylated. Differentially phosphorylated in basal and agonist-induced conditions. Agonist-mediated phosphorylation modulates receptor internalization. Phosphorylated by GRK2 in a agonist-dependent manner. Phosphorylation at Tyr-168 requires receptor activation, is dependent on non-receptor protein tyrosine kinase Src and results in a decrease in agonist efficacy by reducing G-protein coupling efficiency. Phosphorylated on tyrosine residues; the phosphorylation is involved in agonist-induced G-protein-independent receptor down-regulation. Phosphorylation at Ser-377 is involved in G-protein-dependent but not beta-arrestin-dependent activation of the ERK pathway. Ubiquitinated. A basal ubiquitination seems not to be related to degradation. Ubiquitination is increased upon formation of OPRM1:OPRD1 oligomers leading to proteasomal degradation; the ubiquitination is diminished by RTP4.

Its subcellular location is the cell membrane. The protein localises to the cell projection. It localises to the axon. The protein resides in the perikaryon. It is found in the dendrite. Its subcellular location is the endosome. Functionally, receptor for endogenous opioids such as beta-endorphin and endomorphin. Receptor for natural and synthetic opioids including morphine, heroin, DAMGO, fentanyl, etorphine, buprenorphin and methadone. Also activated by enkephalin peptides, such as Met-enkephalin or Met-enkephalin-Arg-Phe, with higher affinity for Met-enkephalin-Arg-Phe. Agonist binding to the receptor induces coupling to an inactive GDP-bound heterotrimeric G-protein complex and subsequent exchange of GDP for GTP in the G-protein alpha subunit leading to dissociation of the G-protein complex with the free GTP-bound G-protein alpha and the G-protein beta-gamma dimer activating downstream cellular effectors. The agonist- and cell type-specific activity is predominantly coupled to pertussis toxin-sensitive G(i) and G(o) G alpha proteins, GNAI1, GNAI2, GNAI3 and GNAO1, and to a lesser extent to pertussis toxin-insensitive G alpha proteins GNAZ and GNA15. They mediate an array of downstream cellular responses, including inhibition of adenylate cyclase activity and both N-type and L-type calcium channels, activation of inward rectifying potassium channels, mitogen-activated protein kinase (MAPK), phospholipase C (PLC), phosphoinositide/protein kinase (PKC), phosphoinositide 3-kinase (PI3K) and regulation of NF-kappa-B. Also couples to adenylate cyclase stimulatory G alpha proteins. The selective temporal coupling to G-proteins and subsequent signaling can be regulated by RGSZ proteins, such as RGS9, RGS17 and RGS4. Phosphorylation by members of the GPRK subfamily of Ser/Thr protein kinases and association with beta-arrestins is involved in short-term receptor desensitization. Beta-arrestins associate with the GPRK-phosphorylated receptor and uncouple it from the G-protein thus terminating signal transduction. The phosphorylated receptor is internalized through endocytosis via clathrin-coated pits which involves beta-arrestins. The activation of the ERK pathway occurs either in a G-protein-dependent or a beta-arrestin-dependent manner and is regulated by agonist-specific receptor phosphorylation. Acts as a class A G-protein coupled receptor (GPCR) which dissociates from beta-arrestin at or near the plasma membrane and undergoes rapid recycling. Receptor down-regulation pathways are varying with the agonist and occur dependent or independent of G-protein coupling. Endogenous ligands induce rapid desensitization, endocytosis and recycling. Heterooligomerization with other GPCRs can modulate agonist binding, signaling and trafficking properties. Involved in neurogenesis. The polypeptide is Mu-type opioid receptor (OPRM1) (Macaca mulatta (Rhesus macaque)).